The following is a 231-amino-acid chain: 2-C-methyl-D-erythritol 4-phosphate cytidylyltransferase (231 aa).

It belongs to the IspD/TarI cytidylyltransferase family. IspD subfamily.

The enzyme catalyses 2-C-methyl-D-erythritol 4-phosphate + CTP + H(+) = 4-CDP-2-C-methyl-D-erythritol + diphosphate. The protein operates within isoprenoid biosynthesis; isopentenyl diphosphate biosynthesis via DXP pathway; isopentenyl diphosphate from 1-deoxy-D-xylulose 5-phosphate: step 2/6. Catalyzes the formation of 4-diphosphocytidyl-2-C-methyl-D-erythritol from CTP and 2-C-methyl-D-erythritol 4-phosphate (MEP). The chain is 2-C-methyl-D-erythritol 4-phosphate cytidylyltransferase from Dictyoglomus thermophilum (strain ATCC 35947 / DSM 3960 / H-6-12).